Here is a 406-residue protein sequence, read N- to C-terminus: Cysteine desulfurase (406 aa).

Residue Lys-226 is modified to N6-(pyridoxal phosphate)lysine. Catalysis depends on Cys-364, which acts as the Cysteine persulfide intermediate.

This sequence belongs to the class-V pyridoxal-phosphate-dependent aminotransferase family. Csd subfamily. Homodimer. Interacts with SufE and the SufBCD complex composed of SufB, SufC and SufD. The interaction with SufE is required to mediate the direct transfer of the sulfur atom from the S-sulfanylcysteine. Requires pyridoxal 5'-phosphate as cofactor.

It is found in the cytoplasm. It carries out the reaction (sulfur carrier)-H + L-cysteine = (sulfur carrier)-SH + L-alanine. It catalyses the reaction L-selenocysteine + AH2 = hydrogenselenide + L-alanine + A + H(+). Its pathway is cofactor biosynthesis; iron-sulfur cluster biosynthesis. Cysteine desulfurases mobilize the sulfur from L-cysteine to yield L-alanine, an essential step in sulfur metabolism for biosynthesis of a variety of sulfur-containing biomolecules. Component of the suf operon, which is activated and required under specific conditions such as oxidative stress and iron limitation. Acts as a potent selenocysteine lyase in vitro, that mobilizes selenium from L-selenocysteine. Selenocysteine lyase activity is however unsure in vivo. This Escherichia coli O7:K1 (strain IAI39 / ExPEC) protein is Cysteine desulfurase.